Reading from the N-terminus, the 749-residue chain is Probable serine/threonine-protein kinase fhkD (749 aa).

In terms of domain architecture, FHA spans 47-150 (IFFGRNPKRC…NGTFVKGCIL (104 aa)). Over residues 84-126 (NNNNNDGDNNNNNNNNNNNNNNNNNNNNNNNNNNNNNNNNNNN) the composition is skewed to low complexity. The interval 84-130 (NNNNNDGDNNNNNNNNNNNNNNNNNNNNNNNNNNNNNNNNNNNTTKN) is disordered. In terms of domain architecture, Protein kinase spans 199–472 (YSIQGILGTG…TKGALSHDWF (274 aa)). ATP-binding positions include 205–213 (LGTGNFSVV) and K228. D323 acts as the Proton acceptor in catalysis. Disordered regions lie at residues 512 to 620 (NIPM…PAII) and 640 to 749 (CTPT…LKGS). Residues 516-561 (TLNSTTTNTTSPNNNNNNNNNNNNKNNNKNIIKSLNSNSNNYNNNS) show a composition bias toward low complexity. Over residues 562 to 572 (VLKKTSQSPKT) the composition is skewed to polar residues. Composition is skewed to low complexity over residues 590–611 (NNNN…NNNN) and 651–667 (TNST…TSNS). Polar residues predominate over residues 668–687 (VTMGTSSTSIPVSNSITMKS). The span at 696–707 (DGDKKRKEKESS) shows a compositional bias: basic and acidic residues. A compositionally biased stretch (low complexity) spans 708–739 (SSENVNDVIVINSNNHNNNNNNNHNINNGISS).

It belongs to the protein kinase superfamily. CAMK Ser/Thr protein kinase family. CHK2 subfamily.

It catalyses the reaction L-seryl-[protein] + ATP = O-phospho-L-seryl-[protein] + ADP + H(+). It carries out the reaction L-threonyl-[protein] + ATP = O-phospho-L-threonyl-[protein] + ADP + H(+). This Dictyostelium discoideum (Social amoeba) protein is Probable serine/threonine-protein kinase fhkD (fhkD).